Reading from the N-terminus, the 122-residue chain is Large ribosomal subunit protein uL24 (122 aa).

It belongs to the universal ribosomal protein uL24 family. As to quaternary structure, part of the 50S ribosomal subunit.

Its function is as follows. One of two assembly initiator proteins, it binds directly to the 5'-end of the 23S rRNA, where it nucleates assembly of the 50S subunit. Functionally, located at the polypeptide exit tunnel on the outside of the subunit. The polypeptide is Large ribosomal subunit protein uL24 (Methanosarcina mazei (strain ATCC BAA-159 / DSM 3647 / Goe1 / Go1 / JCM 11833 / OCM 88) (Methanosarcina frisia)).